We begin with the raw amino-acid sequence, 298 residues long: Rhodomycin D methylesterase DauP (298 aa).

Residues 25–277 form the AB hydrolase-1 domain; it reads PLLLIAGGNL…VEIENMGHAL (253 aa).

Belongs to the methyl esterase DnrP family.

The enzyme catalyses rhodomycin D + H2O = 10-carboxy-13-deoxycarminomycin + methanol + H(+). It carries out the reaction 4-O-methylrhodomycin D + H2O = 10-carboxy-13-deoxydaunorubicin + methanol + H(+). It functions in the pathway antibiotic biosynthesis; daunorubicin biosynthesis. The protein operates within antibiotic biosynthesis; carminomycin biosynthesis. In terms of biological role, involved in the biosynthesis of the anthracyclines carminomycin and daunorubicin (daunomycin) which are aromatic polyketide antibiotics that exhibit high cytotoxicity and are widely applied in the chemotherapy of a variety of cancers. Catalyzes the removal of methyl group from the carbomethoxy group of rhodomycin D (10-carbomethoxy-13-deoxycarminomycin) and 4-O-methylrhodomycin D to yield 10-carboxy-13-deoxycarminomycin and 10-carboxy-13-deoxydaunorubicin, respectively. Could be also involved in the decarboxylation of 10-carboxy-13-deoxycarminomycin and 10-carboxy-13-deoxydaunorubicin to yield 13-deoxycarminomycin and 13-deoxydaunorubicin, respectively. It seems that DauK may influence the ability of DauP to carry out the decarboxylation. This chain is Rhodomycin D methylesterase DauP (dauP), found in Streptomyces sp. (strain C5).